The chain runs to 143 residues: Ribosomal RNA large subunit methyltransferase H (143 aa).

Residues leucine 68 and glycine 95 each contribute to the S-adenosyl-L-methionine site.

The protein belongs to the RNA methyltransferase RlmH family. Homodimer.

It is found in the cytoplasm. It carries out the reaction pseudouridine(1915) in 23S rRNA + S-adenosyl-L-methionine = N(3)-methylpseudouridine(1915) in 23S rRNA + S-adenosyl-L-homocysteine + H(+). Its function is as follows. Specifically methylates the pseudouridine at position 1915 (m3Psi1915) in 23S rRNA. The chain is Ribosomal RNA large subunit methyltransferase H from Mycoplasma mobile (strain ATCC 43663 / 163K / NCTC 11711) (Mesomycoplasma mobile).